The chain runs to 193 residues: HMG-Y-related protein A (193 aa).

The 71-residue stretch at 11–81 (PIPPYPEMIL…LKNNYFRAGA (71 aa)) folds into the H15 domain. The disordered stretch occupies residues 75–193 (NYFRAGAPDA…PAVPSETAAA (119 aa)). Residues 86–92 (PKRGRGR) carry the Nuclear localization signal 1 (NLS) motif. 4 consecutive DNA-binding regions (a.T hook) follow at residues 87–98 (KRGRGRPPKARD), 113–124 (GRGRGRPPKAKS), 138–149 (PKPRGRPPKKAK), and 173–184 (KRGRGRPPKVRP). Residues 145–149 (PKKAK) carry the Nuclear localization signal 2 (NLS) motif.

This sequence belongs to the histone H1/H5 family. In terms of processing, phosphorylated by CDK, this phosphorylation prevents DNA-binding. Motility is increased when hypophosphorylated. Acetylated.

The protein resides in the nucleus. Its subcellular location is the nucleolus. Functionally, binds A/T-rich DNA (e.g. present in the storage gamma-zein gene promoter) with a highly dynamic distribution into the nucleus. Probably involved in endosperm development, during cells shift from a mitotic cycle to endoreduplication leading to massive synthesis of storage proteins (zeins) and starch. In Zea mays (Maize), this protein is HMG-Y-related protein A.